The primary structure comprises 260 residues: Ribonuclease PH (260 aa).

Phosphate contacts are provided by residues R88 and 126–128 (GTR).

The protein belongs to the RNase PH family. In terms of assembly, homohexameric ring arranged as a trimer of dimers.

The enzyme catalyses tRNA(n+1) + phosphate = tRNA(n) + a ribonucleoside 5'-diphosphate. Its function is as follows. Phosphorolytic 3'-5' exoribonuclease that plays an important role in tRNA 3'-end maturation. Removes nucleotide residues following the 3'-CCA terminus of tRNAs; can also add nucleotides to the ends of RNA molecules by using nucleoside diphosphates as substrates, but this may not be physiologically important. Probably plays a role in initiation of 16S rRNA degradation (leading to ribosome degradation) during starvation. This Mycobacterium sp. (strain JLS) protein is Ribonuclease PH.